Reading from the N-terminus, the 1351-residue chain is DNA-directed RNA polymerase subunit beta' (1351 aa).

Residues Cys-70, Cys-72, Cys-85, and Cys-88 each coordinate Zn(2+). The Mg(2+) site is built by Asp-460, Asp-462, and Asp-464. Residues Cys-801, Cys-875, Cys-882, and Cys-885 each contribute to the Zn(2+) site.

The protein belongs to the RNA polymerase beta' chain family. In terms of assembly, the RNAP catalytic core consists of 2 alpha, 1 beta, 1 beta' and 1 omega subunit. When a sigma factor is associated with the core the holoenzyme is formed, which can initiate transcription. The cofactor is Mg(2+). Zn(2+) serves as cofactor.

The enzyme catalyses RNA(n) + a ribonucleoside 5'-triphosphate = RNA(n+1) + diphosphate. Functionally, DNA-dependent RNA polymerase catalyzes the transcription of DNA into RNA using the four ribonucleoside triphosphates as substrates. This is DNA-directed RNA polymerase subunit beta' from Syntrophobacter fumaroxidans (strain DSM 10017 / MPOB).